The following is a 151-amino-acid chain: U1 small nuclear ribonucleoprotein C (151 aa).

A Matrin-type zinc finger spans residues 4 to 36 (FYCEYCSIYLTHSSPAGRKQHSQGRKHISAKVE).

The protein belongs to the U1 small nuclear ribonucleoprotein C family. In terms of assembly, U1 snRNP is composed of the 7 core Sm proteins B/B', D1, D2, D3, E, F and G that assemble in a heptameric protein ring on the Sm site of the small nuclear RNA to form the core snRNP, and at least 3 U1 snRNP-specific proteins U1-70K, U1-A and U1-C. U1-C interacts with U1 snRNA and the 5' splice-site region of the pre-mRNA.

Its subcellular location is the nucleus. Its function is as follows. Component of the spliceosomal U1 snRNP, which is essential for recognition of the pre-mRNA 5' splice-site and the subsequent assembly of the spliceosome. U1-C is directly involved in initial 5' splice-site recognition for both constitutive and regulated alternative splicing. The interaction with the 5' splice-site seems to precede base-pairing between the pre-mRNA and the U1 snRNA. Stimulates commitment or early (E) complex formation by stabilizing the base pairing of the 5' end of the U1 snRNA and the 5' splice-site region. This is U1 small nuclear ribonucleoprotein C from Theileria annulata.